A 212-amino-acid chain; its full sequence is 3-isopropylmalate dehydratase small subunit 1 (212 aa).

This sequence belongs to the LeuD family. LeuD type 1 subfamily. In terms of assembly, heterodimer of LeuC and LeuD.

The enzyme catalyses (2R,3S)-3-isopropylmalate = (2S)-2-isopropylmalate. It participates in amino-acid biosynthesis; L-leucine biosynthesis; L-leucine from 3-methyl-2-oxobutanoate: step 2/4. Functionally, catalyzes the isomerization between 2-isopropylmalate and 3-isopropylmalate, via the formation of 2-isopropylmaleate. The chain is 3-isopropylmalate dehydratase small subunit 1 from Chromobacterium violaceum (strain ATCC 12472 / DSM 30191 / JCM 1249 / CCUG 213 / NBRC 12614 / NCIMB 9131 / NCTC 9757 / MK).